The chain runs to 84 residues: Large ribosomal subunit protein bL27 (84 aa).

The segment at Met-1–Gly-22 is disordered.

It belongs to the bacterial ribosomal protein bL27 family.

The protein is Large ribosomal subunit protein bL27 of Shewanella frigidimarina (strain NCIMB 400).